The sequence spans 138 residues: Large ribosomal subunit protein uL16c (138 aa).

It belongs to the universal ribosomal protein uL16 family. Part of the 50S ribosomal subunit.

It is found in the plastid. It localises to the chloroplast. This is Large ribosomal subunit protein uL16c from Emiliania huxleyi (Coccolithophore).